A 270-amino-acid chain; its full sequence is tRNA pseudouridine synthase A (270 aa).

D60 (nucleophile) is an active-site residue. The tract at residues 107–111 is RNA binding; it reads FHARF. Substrate is bound at residue Y118. Positions 168-172 are interaction with tRNA; the sequence is QCQSR.

It belongs to the tRNA pseudouridine synthase TruA family. In terms of assembly, homodimer.

It carries out the reaction uridine(38/39/40) in tRNA = pseudouridine(38/39/40) in tRNA. Its function is as follows. Formation of pseudouridine at positions 38, 39 and 40 in the anticodon stem and loop of transfer RNAs. The polypeptide is tRNA pseudouridine synthase A (Escherichia fergusonii (strain ATCC 35469 / DSM 13698 / CCUG 18766 / IAM 14443 / JCM 21226 / LMG 7866 / NBRC 102419 / NCTC 12128 / CDC 0568-73)).